We begin with the raw amino-acid sequence, 466 residues long: Magnetosome-associated protein MamJ (466 aa).

Disordered stretches follow at residues 1-23 (MAKN…ISTG) and 60-80 (ANQG…RSQD). The not required to restore magnetic response to deletion mutant stretch occupies residues 1 to 24 (MAKNRRDRGTDLPGDGDQKISTGP). Residues 25–80 (EIVSVTVHPSPNLAAAAKPVQGDIWASLLESSPWSANQGGLVETAQPPSAPIRSQD) form a required to restore magnetic response to deletion mutant region. 2 Tandem repeat unit repeats span residues 81-168 (PVPV…VEPE) and 169-256 (PAPV…VEPE). Not required to restore magnetic response to deletion mutant regions lie at residues 81–256 (PVPV…VEPE), 136–334 (ETDA…SQAE), 333–374 (AESV…AVEA), and 432–466 (VGSN…DKNK). Glu-Pro-rich motif repeat units lie at residues 145 to 164 (IEPE…EAAE), 233 to 252 (IEPE…EAAE), and 253 to 272 (VEPE…EAAE). Required to restore magnetic response to deletion mutant regions lie at residues 375–432 (TRQP…GRLV) and 426–466 (VKGG…DKNK).

It belongs to the magnetosome MamJ protein family. As to quaternary structure, forms homooligomers. Interacts with MamK. In terms of processing, identified by N-terminal sequencing of a protein that is about 96 kDa in size. The protein runs anomalously on protein gels.

The protein resides in the magnetosome. Its function is as follows. Required for assembly of magnetosome chains. Regulates the dynamic behavior of MamK filaments. May connect magnetosomes to MamK filaments. Moves from the cell poles towards midcell; movement does not depend on the treadmilling ability of MamK, suggesting MamJ associates and disassociates continuously from the MamK filament. This chain is Magnetosome-associated protein MamJ, found in Magnetospirillum gryphiswaldense (strain DSM 6361 / JCM 21280 / NBRC 15271 / MSR-1).